The sequence spans 350 residues: DNA polymerase delta subunit 3 (350 aa).

Residues 131-350 form a disordered region; the sequence is EEKSKPLVRP…LESFFKRKAK (220 aa). Composition is skewed to basic and acidic residues over residues 146–162 and 172–195; these read TTPEETTGRKSKSKDMG and MKKDRDDKETSRQNELRKRKEENL. Threonine 223 is subject to Phosphothreonine. Serine 230 is subject to Phosphoserine. Residues 234 to 248 are compositionally biased toward basic and acidic residues; sequence SPKETDSNDKDKNND. The span at 249-262 shows a compositional bias: acidic residues; it reads DLEDLLETTAEDSL. The segment covering 274 to 286 has biased composition (basic and acidic residues); that stretch reads SETEHSKEPKSEE. The span at 320 to 332 shows a compositional bias: polar residues; that stretch reads LSSSKKQETPSSN.

As to quaternary structure, DNA polymerase delta is a heterotrimer of POL3, POL32 and HYS2. POL32 can form homodimers.

It is found in the nucleus. Its function is as follows. DNA polymerase delta (DNA polymerase III) participates in chromosomal DNA replication. It is required during synthesis of the leading and lagging DNA strands at the replication fork and binds at/or near replication origins and moves along DNA with the replication fork. It has 3'-5' proofreading exonuclease activity that correct errors arising during DNA replication. It is also involved in DNA synthesis during DNA repair. This is DNA polymerase delta subunit 3 (POL32) from Saccharomyces cerevisiae (strain ATCC 204508 / S288c) (Baker's yeast).